Consider the following 773-residue polypeptide: 3-isopropylmalate dehydratase (773 aa).

[4Fe-4S] cluster contacts are provided by Cys-355, Cys-415, and Cys-418.

This sequence belongs to the aconitase/IPM isomerase family. Monomer. The cofactor is [4Fe-4S] cluster.

The enzyme catalyses (2R,3S)-3-isopropylmalate = (2S)-2-isopropylmalate. Its pathway is amino-acid biosynthesis; L-leucine biosynthesis; L-leucine from 3-methyl-2-oxobutanoate: step 2/4. Its function is as follows. Catalyzes the isomerization between 2-isopropylmalate and 3-isopropylmalate, via the formation of 2-isopropylmaleate. This Mycosarcoma maydis (Corn smut fungus) protein is 3-isopropylmalate dehydratase (LEU1).